We begin with the raw amino-acid sequence, 509 residues long: ATP synthase subunit alpha (509 aa).

An ATP-binding site is contributed by 169–176 (GDRQTGKT).

It belongs to the ATPase alpha/beta chains family. F-type ATPases have 2 components, CF(1) - the catalytic core - and CF(0) - the membrane proton channel. CF(1) has five subunits: alpha(3), beta(3), gamma(1), delta(1), epsilon(1). CF(0) has three main subunits: a(1), b(2) and c(9-12). The alpha and beta chains form an alternating ring which encloses part of the gamma chain. CF(1) is attached to CF(0) by a central stalk formed by the gamma and epsilon chains, while a peripheral stalk is formed by the delta and b chains.

Its subcellular location is the cell inner membrane. It carries out the reaction ATP + H2O + 4 H(+)(in) = ADP + phosphate + 5 H(+)(out). Its function is as follows. Produces ATP from ADP in the presence of a proton gradient across the membrane. The alpha chain is a regulatory subunit. The protein is ATP synthase subunit alpha of Agrobacterium fabrum (strain C58 / ATCC 33970) (Agrobacterium tumefaciens (strain C58)).